The following is a 501-amino-acid chain: Protein MGF 505-4R (501 aa).

The protein belongs to the asfivirus MGF 505 family.

Functionally, plays a role in virus cell tropism, and may be required for efficient virus replication in macrophages. In African swine fever virus (isolate Tick/South Africa/Pretoriuskop Pr4/1996) (ASFV), this protein is Protein MGF 505-4R.